A 199-amino-acid chain; its full sequence is Guanylate kinase (199 aa).

In terms of domain architecture, Guanylate kinase-like spans 19-198 (VTVAVVSGPT…AVAHLVELLS (180 aa)). 26 to 33 (GPTAVGKG) contributes to the ATP binding site.

This sequence belongs to the guanylate kinase family.

It localises to the cytoplasm. It carries out the reaction GMP + ATP = GDP + ADP. In terms of biological role, essential for recycling GMP and indirectly, cGMP. This Cutibacterium acnes (strain DSM 16379 / KPA171202) (Propionibacterium acnes) protein is Guanylate kinase.